The sequence spans 243 residues: MALLELSELNQLPKVERVMALAEINNRLDKLSAEDRVLWGLENLPGQAVLTSSFGIQAAVSLHLVTRQKPDIPVILTDTGYLFPETYRFIDQLTEKLDLNLQVFRAEQSPAWQEARYGKLWEQGVEGIERYNQINKVEPMNRALETLQGQTWFAGLRRDQSGSRAHLPVLAVKKGIFKLLPIIDWDNRQVYQYLQQHGLSYHPLWEQGYLSVGDTHTTRKWEPGMAEEETRFFGLKRECGLHE.

The active-site Nucleophile; cysteine thiosulfonate intermediate is Cys-239.

The protein belongs to the PAPS reductase family. CysH subfamily.

Its subcellular location is the cytoplasm. The catalysed reaction is [thioredoxin]-disulfide + sulfite + adenosine 3',5'-bisphosphate + 2 H(+) = [thioredoxin]-dithiol + 3'-phosphoadenylyl sulfate. Its pathway is sulfur metabolism; hydrogen sulfide biosynthesis; sulfite from sulfate: step 3/3. Catalyzes the formation of sulfite from phosphoadenosine 5'-phosphosulfate (PAPS) using thioredoxin as an electron donor. The chain is Phosphoadenosine 5'-phosphosulfate reductase from Erwinia tasmaniensis (strain DSM 17950 / CFBP 7177 / CIP 109463 / NCPPB 4357 / Et1/99).